The following is a 270-amino-acid chain: Tetraspanin-14 (270 aa).

The Cytoplasmic segment spans residues 1 to 17 (MHYYRYSNAKVSCWYKY). Residues 18–38 (LLFSYNIIFWLAGVVFLGVGL) form a helical membrane-spanning segment. Over 39–61 (WAWSEKGVLSDLTKVTRMHGIDP) the chain is Extracellular. A helical membrane pass occupies residues 62-82 (VVLVLMVGVVMFTLGFAGCVG). The Cytoplasmic portion of the chain corresponds to 83–92 (ALRENICLLN). A helical transmembrane segment spans residues 93 to 113 (FFCGTIVLIFFLELAVAVLAF). The Extracellular portion of the chain corresponds to 114–232 (LFQDWVRDRF…QALESWLPRN (119 aa)). The interval 114–232 (LFQDWVRDRF…QALESWLPRN (119 aa)) is necessary and sufficient for interaction with ADAM10. 4 disulfides stabilise this stretch: C153/C221, C154/C186, C170/C180, and C187/C200. N169 carries an N-linked (GlcNAc...) asparagine glycan. A helical transmembrane segment spans residues 233–253 (IYIVAGVFIAISLLQIFGIFL). The Cytoplasmic portion of the chain corresponds to 254–270 (ARTLISDIEAVKAGHHF).

It belongs to the tetraspanin (TM4SF) family. Interacts with ADAM10; the interaction promotes ADAM10 maturation and cell surface expression.

Its subcellular location is the cell membrane. Part of TspanC8 subgroup, composed of 6 members that interact with the transmembrane metalloprotease ADAM10. This interaction is required for ADAM10 exit from the endoplasmic reticulum and for enzymatic maturation and trafficking to the cell surface as well as substrate specificity. Different TspanC8/ADAM10 complexes have distinct substrates. Negatively regulates ADAM10-mediated cleavage of GP6. Promotes ADAM10-mediated cleavage of CDH5. This Homo sapiens (Human) protein is Tetraspanin-14.